Here is an 864-residue protein sequence, read N- to C-terminus: Microtubule-associated protein TORTIFOLIA1 (864 aa).

A disordered region spans residues 1-26; sequence MSTPTTSGSAAKPTRPARSSSLATRS. Residues 17 to 26 are compositionally biased toward polar residues; that stretch reads ARSSSLATRS. HEAT repeat units follow at residues 76–113, 117–154, 167–204, 208–245, and 248–285; these read ETLP…LHCD, AHLT…IYLK, LAVG…SAAS, TSFQ…VGAI, and QSLE…HSSG. The disordered stretch occupies residues 329–353; the sequence is DGASDDSKLSASEQLGSEKNGEKRS. Residue Ser414 is modified to Phosphoserine. The disordered stretch occupies residues 426-504; the sequence is NDEEESGLDD…QSEGSFTSNR (79 aa). The segment covering 439–448 has biased composition (polar residues); sequence MGSSNRLKNT. A compositionally biased stretch (basic and acidic residues) spans 449-459; the sequence is QADDKQVKGRF. Positions 489–504 are enriched in polar residues; that stretch reads VSNTDNQSEGSFTSNR. The stretch at 508–561 forms a coiled coil; it reads SAIQRQLLQLERQQTNLMNMLQEFIGGSHDSMVTLEGRVRGLERIVEDMARDLS. Residues 615–670 form a disordered region; the sequence is DDWFIPPHAASRNGQAGPRRSPRSEQYENEHMGNGRRGWDNKASGTIRFGEGPSAR. Basic and acidic residues predominate over residues 636-654; the sequence is PRSEQYENEHMGNGRRGWD.

In terms of assembly, interacts with WAV3. Expressed in roots, hypocotyls, stems, flowers, siliques, inflorescences, petioles, cotyledons, and leaves. Particularly present in root tips and shoot meristems.

It is found in the cytoplasm. Its subcellular location is the cytoskeleton. Functionally, plant-specific microtubule-associated protein (MAP) that regulates the orientation of cortical microtubules and the direction of organ growth. Determines microtubule organization by modulating microtubule severing. In Arabidopsis thaliana (Mouse-ear cress), this protein is Microtubule-associated protein TORTIFOLIA1.